The primary structure comprises 209 residues: Urease accessory protein UreG (209 aa).

14 to 21 (GPVGSGKT) is a binding site for GTP.

Belongs to the SIMIBI class G3E GTPase family. UreG subfamily. Homodimer. UreD, UreF and UreG form a complex that acts as a GTP-hydrolysis-dependent molecular chaperone, activating the urease apoprotein by helping to assemble the nickel containing metallocenter of UreC. The UreE protein probably delivers the nickel.

The protein resides in the cytoplasm. Its function is as follows. Facilitates the functional incorporation of the urease nickel metallocenter. This process requires GTP hydrolysis, probably effectuated by UreG. This is Urease accessory protein UreG from Rhodopseudomonas palustris (strain ATCC BAA-98 / CGA009).